An 803-amino-acid chain; its full sequence is Leucine--tRNA ligase (803 aa).

Positions 40 to 51 (PYPSGQGLHVGH) match the 'HIGH' region motif. The 'KMSKS' region motif lies at 575 to 579 (KMSKS). Residue Lys578 participates in ATP binding.

It belongs to the class-I aminoacyl-tRNA synthetase family.

It is found in the cytoplasm. It catalyses the reaction tRNA(Leu) + L-leucine + ATP = L-leucyl-tRNA(Leu) + AMP + diphosphate. This chain is Leucine--tRNA ligase, found in Lacticaseibacillus paracasei (strain ATCC 334 / BCRC 17002 / CCUG 31169 / CIP 107868 / KCTC 3260 / NRRL B-441) (Lactobacillus paracasei).